The primary structure comprises 436 residues: mRNA cap guanine-N(7) methyltransferase (436 aa).

The tract at residues 1–50 (MSTKPEKPIWMSQEDYDRQYGSITGDESSTVSKKDSKVTANAPGDGNGSL) is disordered. Residues 141–424 (SPIIKLRNFN…FYTMFAFRKV (284 aa)) enclose the mRNA cap 0 methyltransferase domain. 150-151 (NN) is an mRNA binding site. Residues Lys-154, Gly-172, Asp-194, Asp-223, Gln-249, and Tyr-254 each coordinate S-adenosyl-L-methionine.

It belongs to the class I-like SAM-binding methyltransferase superfamily. mRNA cap 0 methyltransferase family.

It localises to the nucleus. It catalyses the reaction a 5'-end (5'-triphosphoguanosine)-ribonucleoside in mRNA + S-adenosyl-L-methionine = a 5'-end (N(7)-methyl 5'-triphosphoguanosine)-ribonucleoside in mRNA + S-adenosyl-L-homocysteine. Functionally, responsible for methylating the 5'-cap structure of mRNAs. This is mRNA cap guanine-N(7) methyltransferase (ABD1) from Saccharomyces cerevisiae (strain ATCC 204508 / S288c) (Baker's yeast).